A 539-amino-acid chain; its full sequence is Chaperonin GroEL (539 aa).

ATP-binding positions include 30–33 (TLGP), Lys-51, 87–91 (DGTTT), Gly-415, and Asp-495.

The protein belongs to the chaperonin (HSP60) family. Forms a cylinder of 14 subunits composed of two heptameric rings stacked back-to-back. Interacts with the co-chaperonin GroES.

Its subcellular location is the cytoplasm. The enzyme catalyses ATP + H2O + a folded polypeptide = ADP + phosphate + an unfolded polypeptide.. Its function is as follows. Together with its co-chaperonin GroES, plays an essential role in assisting protein folding. The GroEL-GroES system forms a nano-cage that allows encapsulation of the non-native substrate proteins and provides a physical environment optimized to promote and accelerate protein folding. This is Chaperonin GroEL from Serratia rubidaea (Serratia marinorubra).